The chain runs to 201 residues: FMN-dependent NADH:quinone oxidoreductase (201 aa).

FMN contacts are provided by residues S10, 16 to 18 (SQS), 96 to 99 (MYNF), and 140 to 143 (SRGG).

This sequence belongs to the azoreductase type 1 family. In terms of assembly, homodimer. The cofactor is FMN.

It catalyses the reaction 2 a quinone + NADH + H(+) = 2 a 1,4-benzosemiquinone + NAD(+). The catalysed reaction is N,N-dimethyl-1,4-phenylenediamine + anthranilate + 2 NAD(+) = 2-(4-dimethylaminophenyl)diazenylbenzoate + 2 NADH + 2 H(+). Functionally, quinone reductase that provides resistance to thiol-specific stress caused by electrophilic quinones. Its function is as follows. Also exhibits azoreductase activity. Catalyzes the reductive cleavage of the azo bond in aromatic azo compounds to the corresponding amines. This Escherichia coli O6:H1 (strain CFT073 / ATCC 700928 / UPEC) protein is FMN-dependent NADH:quinone oxidoreductase.